Here is a 268-residue protein sequence, read N- to C-terminus: NH(3)-dependent NAD(+) synthetase (268 aa).

45–52 (GLSGGIDS) is a binding site for ATP. Asp-51 serves as a coordination point for Mg(2+). Arg-129 is a binding site for deamido-NAD(+). Thr-149 serves as a coordination point for ATP. Glu-154 serves as a coordination point for Mg(2+). Deamido-NAD(+) is bound by residues Lys-162 and Asp-169. ATP contacts are provided by Lys-178 and Thr-200. Position 260–261 (260–261 (HK)) interacts with deamido-NAD(+).

Belongs to the NAD synthetase family. Homodimer.

It catalyses the reaction deamido-NAD(+) + NH4(+) + ATP = AMP + diphosphate + NAD(+) + H(+). It participates in cofactor biosynthesis; NAD(+) biosynthesis; NAD(+) from deamido-NAD(+) (ammonia route): step 1/1. Functionally, catalyzes the ATP-dependent amidation of deamido-NAD to form NAD. Uses ammonia as a nitrogen source. The sequence is that of NH(3)-dependent NAD(+) synthetase from Halobacterium salinarum (strain ATCC 29341 / DSM 671 / R1).